The chain runs to 256 residues: Homeobox protein ceh-34 (256 aa).

The homeobox DNA-binding region spans 134–193 (GEETNYCFKSKSRNVLRDAYKKCQYPSVEDKRRLAQQTELSIIQVSNWFKNKRQRERAAG). A disordered region spans residues 187–233 (QRERAAGQLDRSSARSNDSDDGSSGCESKPPMNIDSPAPPPLPTSFD).

This sequence belongs to the SIX/Sine oculis homeobox family. As to quaternary structure, interacts (via N-terminus) with eya-1 (via C-terminus). In terms of tissue distribution, shows expression only in the pharyngeal nervous system.

The protein resides in the nucleus. Its function is as follows. Acts as a transcription regulator. Binds to the sequence motif 5'-TCAGGTT-3'. Binds to the cis-regulatory element of proapoptotic factor egl-1 gene and together with eya-1 activates egl-1 expression to promote motor neuron M4 sister cell apoptosis. Also promotes apoptosis of I1 pharyngeal neuron sister cell. Together with eya-1, required to specify the coelomocyte fate in embryonic and postembryonic precursors. Required to establish and maintain the differentiation of all 14 classes of pharyngeal neurons. Controls the neurotransmitter signaling capacity of the neurons and is required for the expression of some neurotransmitter receptors including mgl-1, glr-2 and ser-7. Affects the neuropeptidergic identity of pharyngeal neurons. Required for the pharyngeal expression of sensory receptors gur-3, glu-7 and str-97, antimicrobial defense genes such as spp-12, gpla-1/flr-2 and htrl-1, and pan-pharyngeal nervous system genes such as kin-36. Required to establish and maintain pharyngeal nervous system architecture by ensuring correct axon and synapse organization. Required for expression of eya-1 which may act as a transcriptional cofactor to specify distinct pharyngeal neuron types. Cooperates with several homeobox proteins to specify distinct pharyngeal neuron types including unc-86 in the NSM and I1 neurons, ceh-14 in the I2 neuron, ceh-2 and pros-1 in the I3 neuron, ceh-45 in the M1 neuron, ceh-2 in the M3 neuron, ceh-28 and zag-1 in the M4 neuron, and vab-15 in the M5 neuron. This Caenorhabditis elegans protein is Homeobox protein ceh-34 (ceh-34).